We begin with the raw amino-acid sequence, 96 residues long: UPF0235 protein Pfl01_5322 (96 aa).

The protein belongs to the UPF0235 family.

The protein is UPF0235 protein Pfl01_5322 of Pseudomonas fluorescens (strain Pf0-1).